A 254-amino-acid chain; its full sequence is Coiled-coil domain-containing protein 152 (254 aa).

The stretch at 61 to 246 forms a coiled coil; sequence SIKEECATLH…LEQRLSVGKD (186 aa).

In terms of tissue distribution, detected in stomach.

This chain is Coiled-coil domain-containing protein 152 (CCDC152), found in Homo sapiens (Human).